The sequence spans 446 residues: Regulator of drug sensitivity 2 (446 aa).

The segment at residues 15–45 (KTCLFCKRSHVVCDKQRPCSRCVKRDIAHLC) is a DNA-binding region (zn(2)-C6 fungal-type). Disordered regions lie at residues 52–106 (VPNE…PKLD) and 158–218 (ASNV…KEES). Composition is skewed to polar residues over residues 56–70 (MPSQ…NNIQ) and 84–96 (DYQN…SGST). A Phosphoserine modification is found at serine 102. The span at 160–177 (NVHLENGSQTTQSPLEYQ) shows a compositional bias: polar residues. The segment covering 178-192 (NDNRRDEIGVARQEN) has biased composition (basic and acidic residues). The span at 193–206 (RSPTIMSGSSNSIS) shows a compositional bias: polar residues. A compositionally biased stretch (basic and acidic residues) spans 207 to 218 (KGDKQDQEKEES). Threonine 231 carries the phosphothreonine modification.

Phosphorylated by SNF1 in absence of glucose. The phosphorylation is required for induction of transcription of gluconeogenic genes.

The protein localises to the cytoplasm. It is found in the nucleus. Its function is as follows. Transcription factor which regulates the expression of genes for gluconeogenesis, the TCA cycle, and glucose metabolism. Involved in the cell wall remodeling process and drug resistance. In Saccharomyces cerevisiae (strain ATCC 204508 / S288c) (Baker's yeast), this protein is Regulator of drug sensitivity 2 (RDS2).